The following is a 406-amino-acid chain: Zinc finger CCCH domain-containing protein 15 homolog (406 aa).

Residues 1-11 (MPPKKAPAGPS) show a composition bias toward low complexity. The interval 1–70 (MPPKKAPAGP…DKKKDEKEKK (70 aa)) is disordered. A compositionally biased stretch (basic and acidic residues) spans 12-28 (KKTEQKKKEKVIEDKTF). Residues 38-50 (QQKFIQQVQKQVQ) show a composition bias toward low complexity. Basic and acidic residues predominate over residues 56-70 (PRQDGDKKKDEKEKK). Residues 57 to 82 (RQDGDKKKDEKEKKLADLREMASIFK) adopt a coiled-coil conformation. C3H1-type zinc fingers lie at residues 94–121 (DPKS…HDLS) and 166–203 (PTTE…HALP). The tract at residues 336–382 (VDGSGTIASSTRLLDQATEAAKTAAAEDGAASDDENPSSSAPANDAA) is disordered. Low complexity-rich tracts occupy residues 352-364 (ATEA…AEDG) and 372-382 (PSSSAPANDAA).

This sequence belongs to the ZC3H15/TMA46 family.

This chain is Zinc finger CCCH domain-containing protein 15 homolog, found in Drosophila pseudoobscura pseudoobscura (Fruit fly).